Here is a 253-residue protein sequence, read N- to C-terminus: Imidazole glycerol phosphate synthase subunit HisF (253 aa).

Active-site residues include Asp-11 and Asp-130.

Belongs to the HisA/HisF family. In terms of assembly, heterodimer of HisH and HisF.

The protein localises to the cytoplasm. The enzyme catalyses 5-[(5-phospho-1-deoxy-D-ribulos-1-ylimino)methylamino]-1-(5-phospho-beta-D-ribosyl)imidazole-4-carboxamide + L-glutamine = D-erythro-1-(imidazol-4-yl)glycerol 3-phosphate + 5-amino-1-(5-phospho-beta-D-ribosyl)imidazole-4-carboxamide + L-glutamate + H(+). It functions in the pathway amino-acid biosynthesis; L-histidine biosynthesis; L-histidine from 5-phospho-alpha-D-ribose 1-diphosphate: step 5/9. In terms of biological role, IGPS catalyzes the conversion of PRFAR and glutamine to IGP, AICAR and glutamate. The HisF subunit catalyzes the cyclization activity that produces IGP and AICAR from PRFAR using the ammonia provided by the HisH subunit. This is Imidazole glycerol phosphate synthase subunit HisF from Caldanaerobacter subterraneus subsp. tengcongensis (strain DSM 15242 / JCM 11007 / NBRC 100824 / MB4) (Thermoanaerobacter tengcongensis).